The chain runs to 270 residues: HTH-type transcriptional activator AllS (270 aa).

Positions 4–61 (LDPETLRTFVSVAETGSFSRAAEKLYKTTATISYRIKLLEDNTGVALFSRTTRSVLLT) constitute an HTH lysR-type domain. A DNA-binding region (H-T-H motif) is located at residues 21-40 (FSRAAEKLYKTTATISYRIK).

Belongs to the LysR transcriptional regulatory family.

Functionally, positive regulator essential for the expression of allD operon. Binds to the allD promoter. The chain is HTH-type transcriptional activator AllS (allS) from Klebsiella pneumoniae.